Reading from the N-terminus, the 190-residue chain is Large ribosomal subunit protein uL5 (190 aa).

It belongs to the universal ribosomal protein uL5 family. In terms of assembly, part of the 50S ribosomal subunit; part of the 5S rRNA/L5/L18/L25 subcomplex. Contacts the 5S rRNA and the P site tRNA. Forms a bridge to the 30S subunit in the 70S ribosome.

In terms of biological role, this is one of the proteins that bind and probably mediate the attachment of the 5S RNA into the large ribosomal subunit, where it forms part of the central protuberance. In the 70S ribosome it contacts protein S13 of the 30S subunit (bridge B1b), connecting the 2 subunits; this bridge is implicated in subunit movement. Contacts the P site tRNA; the 5S rRNA and some of its associated proteins might help stabilize positioning of ribosome-bound tRNAs. The sequence is that of Large ribosomal subunit protein uL5 from Bifidobacterium longum (strain DJO10A).